The primary structure comprises 290 residues: UPF0761 membrane protein YihY (290 aa).

Helical transmembrane passes span 44-64 (LLSLVPLVAVVFALFAAFPMF), 104-124 (VGACGLIVTALLLMYSIDSAL), 140-160 (FAVYWMILTLGPLLAGASLAI), 183-203 (IFPLLLSWISFWLLYSIVPTI), 210-230 (AIVGAFVAALLFEAGKKGFAL), and 244-264 (VLAVIPILFVWVYWTWCIVLL).

The protein belongs to the UPF0761 family.

The protein localises to the cell inner membrane. In Escherichia fergusonii (strain ATCC 35469 / DSM 13698 / CCUG 18766 / IAM 14443 / JCM 21226 / LMG 7866 / NBRC 102419 / NCTC 12128 / CDC 0568-73), this protein is UPF0761 membrane protein YihY.